Consider the following 112-residue polypeptide: uncharacterized protein (112 aa).

It to U.parvum UU089.1.

This is an uncharacterized protein from Synechocystis sp. (strain ATCC 27184 / PCC 6803 / Kazusa).